Here is a 234-residue protein sequence, read N- to C-terminus: Leucyl/phenylalanyl-tRNA--protein transferase (234 aa).

The protein belongs to the L/F-transferase family.

It localises to the cytoplasm. It catalyses the reaction N-terminal L-lysyl-[protein] + L-leucyl-tRNA(Leu) = N-terminal L-leucyl-L-lysyl-[protein] + tRNA(Leu) + H(+). The catalysed reaction is N-terminal L-arginyl-[protein] + L-leucyl-tRNA(Leu) = N-terminal L-leucyl-L-arginyl-[protein] + tRNA(Leu) + H(+). The enzyme catalyses L-phenylalanyl-tRNA(Phe) + an N-terminal L-alpha-aminoacyl-[protein] = an N-terminal L-phenylalanyl-L-alpha-aminoacyl-[protein] + tRNA(Phe). In terms of biological role, functions in the N-end rule pathway of protein degradation where it conjugates Leu, Phe and, less efficiently, Met from aminoacyl-tRNAs to the N-termini of proteins containing an N-terminal arginine or lysine. This chain is Leucyl/phenylalanyl-tRNA--protein transferase, found in Citrobacter koseri (strain ATCC BAA-895 / CDC 4225-83 / SGSC4696).